Here is a 131-residue protein sequence, read N- to C-terminus: Class I hydrophobin POH2 (131 aa).

The first 21 residues, 1 to 21 (MFFRTSSLFTTIVAFTVMAAA), serve as a signal peptide directing secretion. Intrachain disulfides connect cysteine 50–cysteine 110, cysteine 57–cysteine 104, cysteine 58–cysteine 91, and cysteine 111–cysteine 124. N-linked (GlcNAc...) asparagine glycosylation is found at asparagine 115 and asparagine 128.

Belongs to the fungal hydrophobin family. In terms of assembly, self-assembles to form functional amyloid fibrils called rodlets. Self-assembly into fibrillar rodlets occurs spontaneously at hydrophobic:hydrophilic interfaces and the rodlets further associate laterally to form amphipathic monolayers. Expressionn is switched off in the fruiting bodies but abundantly expressed in the vegetative mycelium of both monokaryon and dikaryon.

It is found in the secreted. The protein resides in the cell wall. Functionally, aerial growth, conidiation, and dispersal of filamentous fungi in the environment rely upon a capability of their secreting small amphipathic proteins called hydrophobins (HPBs) with low sequence identity. Class I can self-assemble into an outermost layer of rodlet bundles on aerial cell surfaces, conferring cellular hydrophobicity that supports fungal growth, development and dispersal; whereas Class II form highly ordered films at water-air interfaces through intermolecular interactions but contribute nothing to the rodlet structure. POH2 is a class I hydrophobin that causes a large drop in the water-surface tension, enabling hyphae to breach the interface and grow into the air, in both the primary and the secondary mycelium. In the latter mycelium POH2 maight also play a role in the emergence of fruiting bodies. Secreted POH2 could also play a role in facilitating lignin degradation. The polypeptide is Class I hydrophobin POH2 (Pleurotus ostreatus (Oyster mushroom)).